Here is a 382-residue protein sequence, read N- to C-terminus: uncharacterized protein (382 aa).

The next 12 membrane-spanning stretches (helical) occupy residues V8–L28, M45–I65, Y75–W95, F102–S122, L131–S151, L157–F177, L204–P224, G231–G251, V270–P290, A291–C311, A325–M345, and S349–L369.

It belongs to the major facilitator superfamily. YcaD (TC 2.A.1.26) family.

The protein localises to the cell inner membrane. This is an uncharacterized protein from Salmonella paratyphi B (strain ATCC BAA-1250 / SPB7).